Here is a 421-residue protein sequence, read N- to C-terminus: 2',3'-cyclic-nucleotide 3'-phosphodiesterase (421 aa).

Phosphoserine is present on residues serine 6 and serine 9. Tyrosine 110 bears the Phosphotyrosine mark. Serine 170 is modified (phosphoserine). The Proton acceptor role is filled by histidine 251. Substrate is bound at residue threonine 253. Histidine 330 acts as the Proton donor in catalysis. Position 332 (threonine 332) interacts with substrate. Residue serine 359 is modified to Phosphoserine. Cysteine 418 carries the cysteine methyl ester modification. Cysteine 418 carries the S-farnesyl cysteine lipid modification. Residues 419 to 421 (TII) constitute a propeptide, removed in mature form.

This sequence belongs to the 2H phosphoesterase superfamily. CNPase family. In terms of assembly, exists as monomers and homodimers.

It is found in the membrane. Its subcellular location is the melanosome. The enzyme catalyses a nucleoside 2',3'-cyclic phosphate + H2O = a nucleoside 2'-phosphate + H(+). Catalyzes the formation of 2'-nucleotide products from 2',3'-cyclic substrates. May participate in RNA metabolism in the myelinating cell, CNP is the third most abundant protein in central nervous system myelin. This chain is 2',3'-cyclic-nucleotide 3'-phosphodiesterase, found in Homo sapiens (Human).